The chain runs to 430 residues: Adenylosuccinate synthetase (430 aa).

GTP contacts are provided by residues 12-18 (GDEGKGK) and 40-42 (GHT). Catalysis depends on Asp13, which acts as the Proton acceptor. The Mg(2+) site is built by Asp13 and Gly40. Residues 13–16 (DEGK), 38–41 (NAGH), Thr128, Arg142, Gln223, Thr238, and Arg302 each bind IMP. The active-site Proton donor is His41. 298–304 (VNTGRTR) provides a ligand contact to substrate. GTP is bound by residues Arg304, 330–332 (KLD), and 412–414 (GVG).

This sequence belongs to the adenylosuccinate synthetase family. As to quaternary structure, homodimer. Mg(2+) serves as cofactor.

Its subcellular location is the cytoplasm. It carries out the reaction IMP + L-aspartate + GTP = N(6)-(1,2-dicarboxyethyl)-AMP + GDP + phosphate + 2 H(+). It functions in the pathway purine metabolism; AMP biosynthesis via de novo pathway; AMP from IMP: step 1/2. In terms of biological role, plays an important role in the de novo pathway of purine nucleotide biosynthesis. Catalyzes the first committed step in the biosynthesis of AMP from IMP. This is Adenylosuccinate synthetase from Corynebacterium ammoniagenes (Brevibacterium ammoniagenes).